The following is a 511-amino-acid chain: ADP,ATP carrier protein 4 (511 aa).

Helical transmembrane passes span 34–54 (VSKF…QNLI), 71–91 (ISFL…AIYV), 102–122 (IFYL…YVIF), 157–177 (FSLF…LLFW), 192–212 (FYPL…QFLE), 231–251 (FHTL…IIAI), 296–316 (LIAT…GPWK), 330–350 (AAFI…FVVL), 361–381 (FTAA…FFAV), 390–410 (LIIA…IGAI), 453–473 (LGKS…PSAS), and 476–496 (SISI…LWAT).

The protein belongs to the ADP/ATP translocase tlc family.

The protein resides in the cell membrane. Provides the rickettsial cell with host ATP in exchange for rickettsial ADP. This is an obligate exchange system. This energy acquiring activity is an important component of rickettsial parasitism. The protein is ADP,ATP carrier protein 4 (tlcD) of Rickettsia felis (strain ATCC VR-1525 / URRWXCal2) (Rickettsia azadi).